A 407-amino-acid polypeptide reads, in one-letter code: Spore germination protein KC (407 aa).

The first 20 residues, 1–20, serve as a signal peptide directing secretion; that stretch reads MVRKCLLAVLMLLSVIVLPG. Cys-21 carries N-palmitoyl cysteine lipidation. A lipid anchor (S-diacylglycerol cysteine) is attached at Cys-21.

The protein belongs to the GerABKC lipoprotein family.

The protein resides in the cell membrane. In terms of biological role, involved in the germination response to the combination of glucose, fructose, L-asparagine, and KCl. The polypeptide is Spore germination protein KC (gerKC) (Bacillus subtilis (strain 168)).